The sequence spans 259 residues: 3-oxo-5-alpha-steroid 4-dehydrogenase 1 (259 aa).

The next 5 membrane-spanning stretches (helical) occupy residues 10 to 30, 86 to 106, 111 to 131, 146 to 166, and 206 to 226; these read LCLLDMLVYLEGFMAFVSIVG, VLLAMFLIHYVQRTLVFPVLI, PTLLVTFVLAFLFCTFNGYVQ, VTHPCFLTGFALWLVGMVINI, and WCGFALASWSLQGVVFALFTL.

Belongs to the steroid 5-alpha reductase family. In terms of tissue distribution, liver and prostate (at a low level).

The protein resides in the microsome membrane. It localises to the endoplasmic reticulum membrane. The catalysed reaction is a 3-oxo-5alpha-steroid + NADP(+) = a 3-oxo-Delta(4)-steroid + NADPH + H(+). It catalyses the reaction 5alpha-pregnane-3,20-dione + NADP(+) = progesterone + NADPH + H(+). The enzyme catalyses 17beta-hydroxy-5alpha-androstan-3-one + NADP(+) = testosterone + NADPH + H(+). It carries out the reaction androst-4-ene-3,17-dione + NADPH + H(+) = 5alpha-androstan-3,17-dione + NADP(+). Converts testosterone into 5-alpha-dihydrotestosterone and progesterone or corticosterone into their corresponding 5-alpha-3-oxosteroids. It plays a central role in sexual differentiation and androgen physiology. This Rattus norvegicus (Rat) protein is 3-oxo-5-alpha-steroid 4-dehydrogenase 1.